Consider the following 377-residue polypeptide: Guanine nucleotide-binding protein subunit beta-1 (377 aa).

WD repeat units lie at residues 63–93 (GHTG…IVWN), 105–135 (LPCA…SIFN), 154–185 (GHKG…VLWD), 202–233 (GHTA…RLWD), 246–276 (GHEG…RLFD), 293–323 (GDIP…YVWD), and 339–369 (SHEG…KIWA).

Belongs to the WD repeat G protein beta family. In terms of assembly, g proteins are composed of 3 units, alpha, beta and gamma.

Functionally, guanine nucleotide-binding proteins (G proteins) are involved as a modulator or transducer in various transmembrane signaling systems. The beta and gamma chains are required for the GTPase activity, for replacement of GDP by GTP, and for G protein-effector interaction. This chain is Guanine nucleotide-binding protein subunit beta-1, found in Nicotiana tabacum (Common tobacco).